The primary structure comprises 200 residues: Large ribosomal subunit protein uL4 (200 aa).

Residues 43 to 71 (RAQKTRAEVSGSGKKPWRQKGTGRARSGD) are disordered.

The protein belongs to the universal ribosomal protein uL4 family. As to quaternary structure, part of the 50S ribosomal subunit.

In terms of biological role, one of the primary rRNA binding proteins, this protein initially binds near the 5'-end of the 23S rRNA. It is important during the early stages of 50S assembly. It makes multiple contacts with different domains of the 23S rRNA in the assembled 50S subunit and ribosome. Its function is as follows. Forms part of the polypeptide exit tunnel. The polypeptide is Large ribosomal subunit protein uL4 (Aggregatibacter actinomycetemcomitans (Actinobacillus actinomycetemcomitans)).